Consider the following 85-residue polypeptide: Transcriptional repressor protein KorC (85 aa).

Positions 28-47 (VLHLAGLTGGQAARILGLGA) form a DNA-binding region, H-T-H motif.

Functionally, acts with KorA as corepressor in the control of the kilC and kilE operons. In Escherichia coli, this protein is Transcriptional repressor protein KorC (korC).